The following is a 238-amino-acid chain: Probable transglycosylase SceD 1 (238 aa).

Positions 1-27 (MKKTVVASTLAVGLGVTGFAAGNSADA) are cleaved as a signal peptide. A compositionally biased stretch (polar residues) spans 87–97 (TNAPAQETAEQ). Residues 87–161 (TNAPAQETAE…SEASEGSSVN (75 aa)) are disordered. Positions 102-156 (EQPQQTEQASTEQPAQEAAPQTEETQQPQQEATTQTTSSSNESTSNESSSSEASE) are enriched in low complexity.

Belongs to the transglycosylase family. SceD subfamily.

It localises to the secreted. Functionally, is able to cleave peptidoglycan and affects clumping and separation of bacterial cells. The polypeptide is Probable transglycosylase SceD 1 (sceD1) (Staphylococcus saprophyticus subsp. saprophyticus (strain ATCC 15305 / DSM 20229 / NCIMB 8711 / NCTC 7292 / S-41)).